The sequence spans 332 residues: MAEGGGGVGVVYVLENEAYLSKEGGTLKVSRRAGREVLLQKPLIAVEEIVILGNAVVTPALLKHCAQEGVGIHYLSPTGTYYAGLTRTPSKNAPARVAQFKAYLEPTWKLALAQRFVLGKIRNGLVFLRRNGAEGWERLKEALLEAERAQDEEALRGAEGRAADLYFRAFAELLPEEFAFGERSRRPPRDPANSLLSLAYTLLAKECESALLVAGLDPYVGYLHEVRYGRPSLALDLMEEFRSVLADSVVLSLLNNRRVTLEDFDDSEGFPRLRKEAWPKFLRAWEGRLNERIQHPLLGKRLAYREILLAQARILVKHLLGELPRYEPFAVR.

3 residues coordinate Mn(2+): glutamate 159, histidine 224, and glutamate 239.

This sequence belongs to the CRISPR-associated endonuclease Cas1 family. As to quaternary structure, homodimer, forms a heterotetramer with a Cas2 homodimer. Mg(2+) serves as cofactor. Requires Mn(2+) as cofactor.

In terms of biological role, CRISPR (clustered regularly interspaced short palindromic repeat), is an adaptive immune system that provides protection against mobile genetic elements (viruses, transposable elements and conjugative plasmids). CRISPR clusters contain spacers, sequences complementary to antecedent mobile elements, and target invading nucleic acids. CRISPR clusters are transcribed and processed into CRISPR RNA (crRNA). Acts as a dsDNA endonuclease. Involved in the integration of spacer DNA into the CRISPR cassette. The sequence is that of CRISPR-associated endonuclease Cas1 3 from Thermus thermophilus (strain ATCC 27634 / DSM 579 / HB8).